The sequence spans 431 residues: UPF0597 protein TDE_2144 (431 aa).

This sequence belongs to the UPF0597 family.

This Treponema denticola (strain ATCC 35405 / DSM 14222 / CIP 103919 / JCM 8153 / KCTC 15104) protein is UPF0597 protein TDE_2144.